A 297-amino-acid polypeptide reads, in one-letter code: Transmembrane protein 178A (297 aa).

A signal peptide spans 1–25; sequence MEPRALVTALSLGLSLCSLGLLVTA. Topologically, residues 26–179 are extracellular; it reads IFTDHWYETD…LLHLRRITAG (154 aa). Positions 41 to 57 are enriched in basic and acidic residues; it reads ESCERSRAGADPPDQKN. The segment at 41–84 is disordered; the sequence is ESCERSRAGADPPDQKNRLMPLSHLPLRDSPPLGRRLLPGGPGR. The segment covering 68-79 has biased composition (low complexity); that stretch reads RDSPPLGRRLLP. A glycan (N-linked (GlcNAc...) asparagine) is linked at Asn-158. The helical transmembrane segment at 180 to 200 threads the bilayer; the sequence is FLGMAVAVLLCGCIVATVSFF. The Cytoplasmic segment spans residues 201–208; it reads WEESLTQH. Residues 209–229 form a helical membrane-spanning segment; sequence VAGLLFLMTGIFCTISLCTYA. The Extracellular segment spans residues 230–257; that stretch reads ASISYDLNRLPKLIYSLPADVEHGYSWS. The helical transmembrane segment at 258-278 threads the bilayer; that stretch reads IFCAWCSLGFIVAAGGLCIAY. The Cytoplasmic segment spans residues 279–297; the sequence is PFISRTKIAQLKSGRDSTV.

This sequence belongs to the TMEM178 family. Interacts with STIM1.

It localises to the endoplasmic reticulum membrane. Its function is as follows. Acts as a negative regulator of osteoclast differentiation in basal and inflammatory conditions by regulating TNFSF11-induced Ca (2+) fluxes, thereby controlling the induction of NFATC1. This Homo sapiens (Human) protein is Transmembrane protein 178A (TMEM178A).